We begin with the raw amino-acid sequence, 145 residues long: Large ribosomal subunit protein bL17 (145 aa).

The protein belongs to the bacterial ribosomal protein bL17 family. Part of the 50S ribosomal subunit. Contacts protein L32.

In Orientia tsutsugamushi (strain Boryong) (Rickettsia tsutsugamushi), this protein is Large ribosomal subunit protein bL17.